We begin with the raw amino-acid sequence, 213 residues long: Orotate phosphoribosyltransferase (213 aa).

Lys-26 serves as a coordination point for 5-phospho-alpha-D-ribose 1-diphosphate. Residue 34–35 coordinates orotate; sequence FF. Residues 72–73, Arg-99, Lys-100, Lys-103, His-105, and 124–132 contribute to the 5-phospho-alpha-D-ribose 1-diphosphate site; these read YK and DDVITAGTA. Residues Thr-128 and Arg-156 each coordinate orotate.

This sequence belongs to the purine/pyrimidine phosphoribosyltransferase family. PyrE subfamily. As to quaternary structure, homodimer. The cofactor is Mg(2+).

The enzyme catalyses orotidine 5'-phosphate + diphosphate = orotate + 5-phospho-alpha-D-ribose 1-diphosphate. The protein operates within pyrimidine metabolism; UMP biosynthesis via de novo pathway; UMP from orotate: step 1/2. Its function is as follows. Catalyzes the transfer of a ribosyl phosphate group from 5-phosphoribose 1-diphosphate to orotate, leading to the formation of orotidine monophosphate (OMP). In Cronobacter sakazakii (strain ATCC BAA-894) (Enterobacter sakazakii), this protein is Orotate phosphoribosyltransferase.